An 842-amino-acid polypeptide reads, in one-letter code: Protein P (842 aa).

Positions 1–177 (MPLSYQHFRK…FCGSPYSWEQ (177 aa)) are terminal protein domain (TP). The tract at residues 178-346 (ELQHGRLVFQ…YCLTHIVNLL (169 aa)) is spacer. The disordered stretch occupies residues 218-274 (LKQSRLGLQPQQGSLARGKSGRSGSIRARVPPTTRRSFGVEPSGSGHIDNRASSTSS). The polymerase/reverse transcriptase domain (RT) stretch occupies residues 347-690 (EDWGPCTEHG…YLHLYPVARR (344 aa)). Residues 357-600 (EHNIRIPRTP…YSLNFMGYVI (244 aa)) form the Reverse transcriptase domain. Mg(2+) contacts are provided by Asp429, Asp551, and Asp552.

Belongs to the hepadnaviridae P protein family.

The catalysed reaction is DNA(n) + a 2'-deoxyribonucleoside 5'-triphosphate = DNA(n+1) + diphosphate. It carries out the reaction Endonucleolytic cleavage to 5'-phosphomonoester.. With respect to regulation, activated by host HSP70 and HSP40 in vitro to be able to bind the epsilon loop of the pgRNA. Because deletion of the RNase H region renders the protein partly chaperone-independent, the chaperones may be needed indirectly to relieve occlusion of the RNA-binding site by this domain. Inhibited by several reverse-transcriptase inhibitors: Lamivudine, Adefovir and Entecavir. Its function is as follows. Multifunctional enzyme that converts the viral RNA genome into dsDNA in viral cytoplasmic capsids. This enzyme displays a DNA polymerase activity that can copy either DNA or RNA templates, and a ribonuclease H (RNase H) activity that cleaves the RNA strand of RNA-DNA heteroduplexes in a partially processive 3'- to 5'-endonucleasic mode. Neo-synthesized pregenomic RNA (pgRNA) are encapsidated together with the P protein, and reverse-transcribed inside the nucleocapsid. Initiation of reverse-transcription occurs first by binding the epsilon loop on the pgRNA genome, and is initiated by protein priming, thereby the 5'-end of (-)DNA is covalently linked to P protein. Partial (+)DNA is synthesized from the (-)DNA template and generates the relaxed circular DNA (RC-DNA) genome. After budding and infection, the RC-DNA migrates in the nucleus, and is converted into a plasmid-like covalently closed circular DNA (cccDNA). The activity of P protein does not seem to be necessary for cccDNA generation, and is presumably released from (+)DNA by host nuclear DNA repair machinery. The chain is Protein P from Hepatitis B virus genotype C subtype adr (isolate Korea/Kim/1989) (HBV-C).